Here is a 597-residue protein sequence, read N- to C-terminus: Centrosomal protein of 70 kDa (597 aa).

The segment at 1-24 is disordered; sequence MFPVAPKPQDSNQPSDRLMTEKQQ. Coiled coils occupy residues 66-179 and 254-320; these read MRQN…QTEV and TYKG…QELI. One copy of the TPR repeat lies at 483–516; the sequence is NGVYPRMNEVYTRLGEMNNAVRNLQELLELDSSS.

Directly interacts with tubulin-gamma; this interaction determines centrosomal localization.

It is found in the cytoplasm. The protein resides in the cytoskeleton. The protein localises to the microtubule organizing center. Its subcellular location is the centrosome. Functionally, plays a role in the organization of both preexisting and nascent microtubules in interphase cells. During mitosis, required for the organization and orientation of the mitotic spindle. This is Centrosomal protein of 70 kDa (CEP70) from Macaca fascicularis (Crab-eating macaque).